The primary structure comprises 355 residues: Methylthioribose-1-phosphate isomerase (355 aa).

Substrate is bound by residues 50-52, R93, and Q198; that span reads RGA. D239 (proton donor) is an active-site residue. 249 to 250 contributes to the substrate binding site; sequence NK.

Belongs to the eIF-2B alpha/beta/delta subunits family. MtnA subfamily. In terms of assembly, homodimer.

The enzyme catalyses 5-(methylsulfanyl)-alpha-D-ribose 1-phosphate = 5-(methylsulfanyl)-D-ribulose 1-phosphate. It functions in the pathway amino-acid biosynthesis; L-methionine biosynthesis via salvage pathway; L-methionine from S-methyl-5-thio-alpha-D-ribose 1-phosphate: step 1/6. Its function is as follows. Catalyzes the interconversion of methylthioribose-1-phosphate (MTR-1-P) into methylthioribulose-1-phosphate (MTRu-1-P). This chain is Methylthioribose-1-phosphate isomerase, found in Geobacillus kaustophilus (strain HTA426).